We begin with the raw amino-acid sequence, 114 residues long: UPF0342 protein lp_1415 (114 aa).

The protein belongs to the UPF0342 family.

This is UPF0342 protein lp_1415 from Lactiplantibacillus plantarum (strain ATCC BAA-793 / NCIMB 8826 / WCFS1) (Lactobacillus plantarum).